Here is a 105-residue protein sequence, read N- to C-terminus: Type VII secretion system extracellular protein D (105 aa).

As to quaternary structure, forms heterodimers with EsxB.

Its subcellular location is the secreted. The chain is Type VII secretion system extracellular protein D from Staphylococcus aureus (strain USA300).